The sequence spans 878 residues: Multiple C2 and transmembrane domain-containing protein 2 (878 aa).

Disordered stretches follow at residues 20-40 (LINL…DLRV) and 143-178 (KPSL…ESTL). Residues 149–161 (DAPEEHDKTHGND) show a composition bias toward basic and acidic residues. C2 domains follow at residues 177–292 (TLGE…EHIL), 334–452 (SKSS…CLEL), and 486–607 (PSER…CYVL). Ca(2+) contacts are provided by Asp210, Asp216, Asp263, Asp265, and Asp270. Residues Asp525, Asp531, Asp577, Asp579, and Asp585 each coordinate Ca(2+). The chain crosses the membrane as a helical span at residues 694–714 (FVVFLVTVWNFELYMIPLALL). The tract at residues 728–752 (KASSTQDSQESTDVEEEGKEEEKES) is disordered. Residues 737-746 (ESTDVEEEGK) are compositionally biased toward acidic residues. A helical transmembrane segment spans residues 794–814 (PFLSLLACLILAITTVILYFI).

Belongs to the MCTP family. It depends on Ca(2+) as a cofactor.

It localises to the membrane. In terms of biological role, might play a role in the development of cardiac outflow tract. This Mus musculus (Mouse) protein is Multiple C2 and transmembrane domain-containing protein 2 (Mctp2).